The sequence spans 427 residues: Putative F-box protein At3g44060 (427 aa).

The F-box domain occupies 1–46; it reads MDCLPDDLLVQILYLLPTKEAVSTSVLSKRWRTLFTRSDNLDFHDP.

The chain is Putative F-box protein At3g44060 from Arabidopsis thaliana (Mouse-ear cress).